Consider the following 20-residue polypeptide: Antifungal protein (20 aa).

The protein belongs to the protease inhibitor I3 (leguminous Kunitz-type inhibitor) family.

Inhibits soybean trypsin. Has antifungal activity against R.cerealis, A.brassicae and A.niger, and weak antifungal activity against F.oxysporum. In Cullen corylifolium (Malaysian scurfpea), this protein is Antifungal protein.